The chain runs to 407 residues: Phosphopentomutase (407 aa).

6 residues coordinate Mn(2+): Asp10, Asp306, His311, Asp347, His348, and His359.

This sequence belongs to the phosphopentomutase family. It depends on Mn(2+) as a cofactor.

The protein resides in the cytoplasm. It carries out the reaction 2-deoxy-alpha-D-ribose 1-phosphate = 2-deoxy-D-ribose 5-phosphate. It catalyses the reaction alpha-D-ribose 1-phosphate = D-ribose 5-phosphate. It functions in the pathway carbohydrate degradation; 2-deoxy-D-ribose 1-phosphate degradation; D-glyceraldehyde 3-phosphate and acetaldehyde from 2-deoxy-alpha-D-ribose 1-phosphate: step 1/2. Isomerase that catalyzes the conversion of deoxy-ribose 1-phosphate (dRib-1-P) and ribose 1-phosphate (Rib-1-P) to deoxy-ribose 5-phosphate (dRib-5-P) and ribose 5-phosphate (Rib-5-P), respectively. This Photorhabdus laumondii subsp. laumondii (strain DSM 15139 / CIP 105565 / TT01) (Photorhabdus luminescens subsp. laumondii) protein is Phosphopentomutase.